The sequence spans 350 residues: UDP-N-acetylenolpyruvoylglucosamine reductase (350 aa).

One can recognise an FAD-binding PCMH-type domain in the interval 24–195 (HVEATARWLL…VAVEFNLPLL (172 aa)). Residue Arg-172 is part of the active site. Ser-245 (proton donor) is an active-site residue. The active site involves Glu-342.

Belongs to the MurB family. The cofactor is FAD.

Its subcellular location is the cytoplasm. The catalysed reaction is UDP-N-acetyl-alpha-D-muramate + NADP(+) = UDP-N-acetyl-3-O-(1-carboxyvinyl)-alpha-D-glucosamine + NADPH + H(+). Its pathway is cell wall biogenesis; peptidoglycan biosynthesis. Its function is as follows. Cell wall formation. The chain is UDP-N-acetylenolpyruvoylglucosamine reductase from Xanthomonas euvesicatoria pv. vesicatoria (strain 85-10) (Xanthomonas campestris pv. vesicatoria).